Reading from the N-terminus, the 307-residue chain is Lactamase-like protein vrtG (307 aa).

His97, His99, Asp101, and His102 together coordinate Zn(2+). The active-site Proton donor/acceptor is Asp101.

The protein belongs to the metallo-beta-lactamase superfamily. Requires Zn(2+) as cofactor.

Its pathway is secondary metabolite biosynthesis; terpenoid biosynthesis. Lactamase-like protein; part of the gene cluster that mediates the biosynthesis of viridicatumtoxin, a tetracycline-like fungal meroterpenoid with a unique, fused spirobicyclic ring system. The first step of the pathway is the production of the malonamoyl-CoA starter unit for the polyketide synthase vrtA. The aldolase vrtJ may be involved in the synthesis of the malonamate substrate for malonamoyl-CoA synthetase vrtB. The polyketide synthase vrtA then may utilize the malonamoyl-CoA starter unit, followed by sequential condensation of eight malonyl-CoA units to form the polyketide backbone. The cyclization of the last ring could be mediated by the lactamase-like protein vrtG. The proposed post-PKS tailoring steps are a hydroxylation at C5 catalyzed the cytochrome P450 monooxygenase vrtE, a hydroxylation at C12a catalyzed by VrtH and/or VrtI, and an O-methylation by the O-methyltransferase vrtF. VrtC is then proposed to catalyze the transfer of a geranyl group synthesized by vrtD to the aromatic C ring of the tetracyclic polyketide intermediate of viridicatumtoxin to yield previridicatumtoxin. Finally, the cytochrome P450 monooxygenase vrtK catalyzes the spirocyclization of the geranyl moiety of previridicatumtoxin to afford viridicatumtoxin. The polypeptide is Lactamase-like protein vrtG (Penicillium aethiopicum).